Here is a 539-residue protein sequence, read N- to C-terminus: Phosphoenolpyruvate carboxykinase (ATP) (539 aa).

Substrate is bound by residues Arg-64, Tyr-206, and Lys-212. Residues Lys-212, His-231, and 247-255 (GLSGTGKTT) contribute to the ATP site. 2 residues coordinate Mn(2+): Lys-212 and His-231. Asp-268 contacts Mn(2+). ATP contacts are provided by residues Glu-296, Arg-332, 448–449 (RI), and Thr-454. Residue Arg-332 participates in substrate binding.

This sequence belongs to the phosphoenolpyruvate carboxykinase (ATP) family. Monomer. Mn(2+) serves as cofactor.

The protein resides in the cytoplasm. It carries out the reaction oxaloacetate + ATP = phosphoenolpyruvate + ADP + CO2. It functions in the pathway carbohydrate biosynthesis; gluconeogenesis. Its function is as follows. Involved in the gluconeogenesis. Catalyzes the conversion of oxaloacetate (OAA) to phosphoenolpyruvate (PEP) through direct phosphoryl transfer between the nucleoside triphosphate and OAA. This chain is Phosphoenolpyruvate carboxykinase (ATP), found in Salmonella choleraesuis (strain SC-B67).